A 424-amino-acid chain; its full sequence is CinA-like protein (424 aa).

It belongs to the CinA family.

This chain is CinA-like protein, found in Prochlorococcus marinus (strain AS9601).